The chain runs to 398 residues: Acetate kinase (398 aa).

Asn7 contributes to the Mg(2+) binding site. Lys14 serves as a coordination point for ATP. Arg91 is a binding site for substrate. Residue Asp148 is the Proton donor/acceptor of the active site. Residues 208 to 212 (HLGNG), 282 to 284 (DFR), and 330 to 334 (GVGEN) contribute to the ATP site. A Mg(2+)-binding site is contributed by Glu383.

It belongs to the acetokinase family. In terms of assembly, homodimer. Mg(2+) is required as a cofactor. It depends on Mn(2+) as a cofactor.

It is found in the cytoplasm. The enzyme catalyses acetate + ATP = acetyl phosphate + ADP. Its pathway is metabolic intermediate biosynthesis; acetyl-CoA biosynthesis; acetyl-CoA from acetate: step 1/2. Catalyzes the formation of acetyl phosphate from acetate and ATP. Can also catalyze the reverse reaction. This chain is Acetate kinase, found in Carboxydothermus hydrogenoformans (strain ATCC BAA-161 / DSM 6008 / Z-2901).